A 197-amino-acid polypeptide reads, in one-letter code: Thymidylate kinase (197 aa).

7–14 (GIDGCGKS) lines the ATP pocket.

This sequence belongs to the thymidylate kinase family.

The catalysed reaction is dTMP + ATP = dTDP + ADP. Phosphorylation of dTMP to form dTDP in both de novo and salvage pathways of dTTP synthesis. The sequence is that of Thymidylate kinase from Fervidobacterium nodosum (strain ATCC 35602 / DSM 5306 / Rt17-B1).